The following is a 526-amino-acid chain: Neutrophil cytosol factor 2 (526 aa).

TPR repeat units lie at residues 37–70 (SRICFNIGCMYTILKNMTEAEKAFTRSINRDKHL), 71–104 (AVAYFQRGMLYYQTEKYDLAIKDLKEALIQLRGN), and 121–154 (CEVLYNIAFMYAKKEEWKKAEEQLALATSMKSEP). At threonine 233 the chain carries Phosphothreonine. The 60-residue stretch at 240-299 (LEGEAHRVLFGFVPETKEELQVMPGNIVFVLKKGNDNWATVMFNGQKGLVPCNYLEPVEL) folds into the SH3 1 domain. Residues 303 to 315 (PQQQPQEESSPQS) show a composition bias toward low complexity. A disordered region spans residues 303–346 (PQQQPQEESSPQSDIPAPPSSKAPGRPQLSPGQKQKEEPKEVKL). Over residues 336–345 (KQKEEPKEVK) the composition is skewed to basic and acidic residues. Residues 351–429 (PYTLKVHYKY…YCLTLWCENT (79 aa)) form the PB1 domain. Serine 399 bears the Phosphoserine mark. The disordered stretch occupies residues 433–458 (QGFPDEPKESEKADANNQTTEPQLKK). Residues 437-446 (DEPKESEKAD) are compositionally biased toward basic and acidic residues. The SH3 2 domain occupies 457-516 (KKGSQVEALFSYEATQPEDLEFQEGDIILVLSKVNEEWLEGECKGKVGIFPKVFVEDCAT).

The protein belongs to the NCF2/NOXA1 family. Component of the phagocyte NADPH oxidase complex composed of an obligatory core heterodimer formed by the membrane proteins CYBA and CYBB and the cytosolic regulatory subunits NCF1/p47-phox, NCF2/p67-phox, NCF4/p40-phox and the small GTPase RAC1 or RAC2. Part of a cytosolic complex composed at least by NCF1, NCF2 and NCF4. Interacts with NCF4. Interacts (via the C-terminal SH3 domain) with NCF1 (via C-terminus). Interacts with SYTL1 and RAC1. May interact with NOXO1. Interacts with S100A8 and calprotectin (S100A8/9). Interacts with GBP7 (via GB1/RHD3-type G domain). Interacts with CYBB; the interaction is enhanced in the presence of GBP7.

It is found in the cytoplasm. In terms of biological role, subunit of the phagocyte NADPH oxidase complex that mediates the transfer of electrons from cytosolic NADPH to O2 to produce the superoxide anion (O2(-)). In the activated complex, electrons are first transferred from NADPH to flavin adenine dinucleotide (FAD) and subsequently transferred via two heme molecules to molecular oxygen, producing superoxide through an outer-sphere reaction. Activation of the NADPH oxidase complex is initiated by the assembly of cytosolic subunits of the NADPH oxidase complex with the core NADPH oxidase complex to form a complex at the plasma membrane or phagosomal membrane. This activation process is initiated by phosphorylation dependent binding of the cytosolic NCF1/p47-phox subunit to the C-terminus of CYBA/p22-phox. The chain is Neutrophil cytosol factor 2 from Homo sapiens (Human).